Here is a 380-residue protein sequence, read N- to C-terminus: 1-deoxy-D-xylulose 5-phosphate reductoisomerase 2 (380 aa).

Residues Ser10, Gly11, Ser12, Ile13, Gly36, Lys37, Asn38, and Asn120 each contribute to the NADPH site. Lys121 is a binding site for 1-deoxy-D-xylulose 5-phosphate. NADPH is bound at residue Glu122. Asp146 contributes to the Mn(2+) binding site. The 1-deoxy-D-xylulose 5-phosphate site is built by Ser147, Glu148, Ser172, and His195. Glu148 provides a ligand contact to Mn(2+). Residue Gly201 coordinates NADPH. 1-deoxy-D-xylulose 5-phosphate-binding residues include Ser208, Asn213, Lys214, and Glu217. Residue Glu217 participates in Mn(2+) binding.

This sequence belongs to the DXR family. Mg(2+) is required as a cofactor. Mn(2+) serves as cofactor.

It carries out the reaction 2-C-methyl-D-erythritol 4-phosphate + NADP(+) = 1-deoxy-D-xylulose 5-phosphate + NADPH + H(+). It functions in the pathway isoprenoid biosynthesis; isopentenyl diphosphate biosynthesis via DXP pathway; isopentenyl diphosphate from 1-deoxy-D-xylulose 5-phosphate: step 1/6. Catalyzes the NADPH-dependent rearrangement and reduction of 1-deoxy-D-xylulose-5-phosphate (DXP) to 2-C-methyl-D-erythritol 4-phosphate (MEP). The polypeptide is 1-deoxy-D-xylulose 5-phosphate reductoisomerase 2 (Bacillus thuringiensis subsp. konkukian (strain 97-27)).